The primary structure comprises 78 residues: Large ribosomal subunit protein bL28 (78 aa).

The disordered stretch occupies residues 1-31 (MAAHCQVTGAEPGFGHSISHSHRRNKRRFDP).

The protein belongs to the bacterial ribosomal protein bL28 family.

The protein is Large ribosomal subunit protein bL28 of Arthrobacter sp. (strain FB24).